The chain runs to 390 residues: Probable tRNA pseudouridine synthase D (390 aa).

Asp-93 acts as the Nucleophile in catalysis. The 188-residue stretch at 166–353 folds into the TRUD domain; that stretch reads YVLNYYGIQR…YGTRRKMITP (188 aa).

Belongs to the pseudouridine synthase TruD family.

It catalyses the reaction uridine(13) in tRNA = pseudouridine(13) in tRNA. In terms of biological role, could be responsible for synthesis of pseudouridine from uracil-13 in transfer RNAs. This is Probable tRNA pseudouridine synthase D from Methanococcus maripaludis (strain C5 / ATCC BAA-1333).